A 104-amino-acid polypeptide reads, in one-letter code: Circadian clock oscillator protein KaiB (104 aa).

It belongs to the KaiB family. The KaiABC complex composition changes during the circadian cycle to control KaiC phosphorylation. Complexes KaiC(6), KaiA(2-4):KaiC(6), KaiB(6):KaiC(6) and KaiC(6):KaiB(6):KaiA(12) are among the most important forms, many form cooperatively. Undergoes a major conformational rearrangment; in the free state forms homotetramers as a dimer of dimers. When bound to the CI domain of KaiC switches to a monomeric thioredoxin-fold (KaiB(fs)). KaiB(fs) binds CikA, leading it to dephosphorylate phospho-RpaA.

In terms of biological role, key component of the KaiABC oscillator complex, which constitutes the main circadian regulator in cyanobacteria. Complex composition changes during the circadian cycle to control KaiC phosphorylation. KaiA stimulates KaiC autophosphorylation, while KaiB sequesters KaiA, leading to KaiC autodephosphorylation. Phospho-Ser-431 KaiC accumulation triggers binding of KaiB to form the KaiB(6):KaiC(6) complex, leading to changes in output regulators CikA and SasA. KaiB switches to a thioredoxin-like fold (KaiB(fs)) when bound to KaiC. KaiB(6):KaiC(6) formation exposes a site for KaiA binding that sequesters KaiA from KaiC, making the KaiC(6):KaiB(6):KaiA(12) complex that results in KaiC autodephosphorylation. A metamorphic protein which reversibly switches between an inactive tetrameric fold and a rare, thioredoxin-like monomeric fold (KaiB(fs)). KaiB(fs) binds phospho-KaiC, KaiA and CikA. KaiA and CikA compete for binding to KaiB(fs), and KaiB(fs) and SasA compete for binding to KaiC, thus the clock oscillator and output signal pathway are tightly coupled. This Acaryochloris marina (strain MBIC 11017) protein is Circadian clock oscillator protein KaiB.